The chain runs to 450 residues: Oxygen-independent coproporphyrinogen III oxidase (450 aa).

A Radical SAM core domain is found at 42 to 276; the sequence is LPAGASASLY…CAIANALKEA (235 aa). Residue Tyr51 participates in S-adenosyl-L-methionine binding. Cys57 and Cys61 together coordinate [4Fe-4S] cluster. Tyr63 contributes to the S-adenosyl-L-methionine binding site. Cys64 contributes to the [4Fe-4S] cluster binding site. S-adenosyl-L-methionine is bound by residues Gly108, 109–110, Glu141, Gln168, Arg180, Asp205, Ala239, and Ile325; that span reads GT.

The protein belongs to the anaerobic coproporphyrinogen-III oxidase family. As to quaternary structure, monomer. [4Fe-4S] cluster is required as a cofactor.

Its subcellular location is the cytoplasm. The enzyme catalyses coproporphyrinogen III + 2 S-adenosyl-L-methionine = protoporphyrinogen IX + 2 5'-deoxyadenosine + 2 L-methionine + 2 CO2. It functions in the pathway porphyrin-containing compound metabolism; protoporphyrin-IX biosynthesis; protoporphyrinogen-IX from coproporphyrinogen-III (AdoMet route): step 1/1. Functionally, involved in the heme biosynthesis. Catalyzes the anaerobic oxidative decarboxylation of propionate groups of rings A and B of coproporphyrinogen III to yield the vinyl groups in protoporphyrinogen IX. This is Oxygen-independent coproporphyrinogen III oxidase (hemN) from Bradyrhizobium diazoefficiens (strain JCM 10833 / BCRC 13528 / IAM 13628 / NBRC 14792 / USDA 110).